The following is a 400-amino-acid chain: Enoyl-[acyl-carrier-protein] reductase [NADH] (400 aa).

Residues 48-53 (GSSSGY), 74-75 (FE), 111-112 (DA), and 139-140 (LA) contribute to the NAD(+) site. A substrate-binding site is contributed by Tyr-225. Tyr-235 (proton donor) is an active-site residue. Residues Lys-244 and 273-275 (VVT) contribute to the NAD(+) site.

This sequence belongs to the TER reductase family. In terms of assembly, monomer.

The enzyme catalyses a 2,3-saturated acyl-[ACP] + NAD(+) = a (2E)-enoyl-[ACP] + NADH + H(+). It functions in the pathway lipid metabolism; fatty acid biosynthesis. Involved in the final reduction of the elongation cycle of fatty acid synthesis (FAS II). Catalyzes the reduction of a carbon-carbon double bond in an enoyl moiety that is covalently linked to an acyl carrier protein (ACP). The protein is Enoyl-[acyl-carrier-protein] reductase [NADH] of Shewanella baltica (strain OS185).